A 354-amino-acid chain; its full sequence is Histidinol-phosphate aminotransferase (354 aa).

K210 is subject to N6-(pyridoxal phosphate)lysine.

The protein belongs to the class-II pyridoxal-phosphate-dependent aminotransferase family. Histidinol-phosphate aminotransferase subfamily. In terms of assembly, homodimer. It depends on pyridoxal 5'-phosphate as a cofactor.

It carries out the reaction L-histidinol phosphate + 2-oxoglutarate = 3-(imidazol-4-yl)-2-oxopropyl phosphate + L-glutamate. Its pathway is amino-acid biosynthesis; L-histidine biosynthesis; L-histidine from 5-phospho-alpha-D-ribose 1-diphosphate: step 7/9. This chain is Histidinol-phosphate aminotransferase, found in Clostridium botulinum (strain 657 / Type Ba4).